Here is a 70-residue protein sequence, read N- to C-terminus: Large ribosomal subunit protein bL32 (70 aa).

Positions 1–19 (MAVPKRKTTPSRRGMRRSH) are enriched in basic residues. Residues 1–21 (MAVPKRKTTPSRRGMRRSHQA) are disordered.

It belongs to the bacterial ribosomal protein bL32 family.

The sequence is that of Large ribosomal subunit protein bL32 from Gluconobacter oxydans (strain 621H) (Gluconobacter suboxydans).